A 382-amino-acid chain; its full sequence is D-galactonate dehydratase (382 aa).

Asp-183 is a binding site for Mg(2+). Residue His-185 is the Proton donor of the active site. 2 residues coordinate Mg(2+): Glu-209 and Glu-235. The active-site Proton acceptor is His-285.

The protein belongs to the mandelate racemase/muconate lactonizing enzyme family. GalD subfamily. The cofactor is Mg(2+).

The catalysed reaction is D-galactonate = 2-dehydro-3-deoxy-D-galactonate + H2O. It functions in the pathway carbohydrate acid metabolism; D-galactonate degradation; D-glyceraldehyde 3-phosphate and pyruvate from D-galactonate: step 1/3. Catalyzes the dehydration of D-galactonate to 2-keto-3-deoxy-D-galactonate. In Ralstonia pickettii (strain 12J), this protein is D-galactonate dehydratase.